The sequence spans 469 residues: 6-phosphofructo-2-kinase/fructose-2,6-bisphosphatase 4 (469 aa).

The tract at residues 1–249 (MASPRELTQN…YYLMNIHVTP (249 aa)) is 6-phosphofructo-2-kinase. Position 46–54 (46–54 (GLPARGKTY)) interacts with ATP. Beta-D-fructose 6-phosphate is bound by residues arginine 79 and arginine 103. Aspartate 129 is an active-site residue. 2 residues coordinate beta-D-fructose 6-phosphate: threonine 131 and arginine 137. Cysteine 159 is a catalytic residue. 168–173 (NIVQVK) contributes to the ATP binding site. Residues lysine 173, arginine 194, and tyrosine 198 each coordinate beta-D-fructose 6-phosphate. The fructose-2,6-bisphosphatase stretch occupies residues 250–469 (RSIYLCRHGE…EALVTVPAHQ (220 aa)). Arginine 256 is a beta-D-fructose 2,6-bisphosphate binding site. The active-site Tele-phosphohistidine intermediate is the histidine 257. 3 residues coordinate beta-D-fructose 2,6-bisphosphate: asparagine 263, glycine 269, and arginine 306. Glutamate 326 (proton donor/acceptor) is an active-site residue. Beta-D-fructose 2,6-bisphosphate is bound by residues tyrosine 337, arginine 351, lysine 355, tyrosine 366, glutamine 392, and arginine 396. 348–351 (FALR) serves as a coordination point for ATP. Residues 392 to 396 (QAVMR) and tyrosine 428 contribute to the ATP site. The residue at position 444 (threonine 444) is a Phosphothreonine; by PKC.

It in the C-terminal section; belongs to the phosphoglycerate mutase family. As to quaternary structure, homodimer.

It catalyses the reaction beta-D-fructose 2,6-bisphosphate + H2O = beta-D-fructose 6-phosphate + phosphate. The catalysed reaction is beta-D-fructose 6-phosphate + ATP = beta-D-fructose 2,6-bisphosphate + ADP + H(+). The most important regulatory mechanism of these opposing activities is by phosphorylation and dephosphorylation of the enzyme. Functionally, synthesis and degradation of fructose 2,6-bisphosphate. This Macaca fascicularis (Crab-eating macaque) protein is 6-phosphofructo-2-kinase/fructose-2,6-bisphosphatase 4 (PFKFB4).